A 200-amino-acid polypeptide reads, in one-letter code: Large ribosomal subunit protein uL4 (200 aa).

The interval 43 to 71 (RAQKTRAEVSGSGKKPWRQKGTGRARSGD) is disordered.

Belongs to the universal ribosomal protein uL4 family. In terms of assembly, part of the 50S ribosomal subunit.

One of the primary rRNA binding proteins, this protein initially binds near the 5'-end of the 23S rRNA. It is important during the early stages of 50S assembly. It makes multiple contacts with different domains of the 23S rRNA in the assembled 50S subunit and ribosome. Functionally, forms part of the polypeptide exit tunnel. The protein is Large ribosomal subunit protein uL4 of Mannheimia succiniciproducens (strain KCTC 0769BP / MBEL55E).